The chain runs to 185 residues: Probable E3 ubiquitin-protein ligase ATL44 (185 aa).

Residues 29–49 (VVILSALLCALICVAGLAAVV) traverse the membrane as a helical segment. Residues 102–144 (CAICLTDFADGEEIRVLPLCGHSFHVECIDKWLVSRSSCPSCR) form an RING-type; atypical zinc finger. The segment at 163–185 (MKDQAHRHQHHQHSSTTIPTFLP) is disordered. A compositionally biased stretch (polar residues) spans 176–185 (SSTTIPTFLP).

It belongs to the RING-type zinc finger family. ATL subfamily. In terms of assembly, interacts with BIK1. Auto-monoubiquitination. As to expression, expressed in stems, flowers and green siliques.

Its subcellular location is the membrane. The catalysed reaction is S-ubiquitinyl-[E2 ubiquitin-conjugating enzyme]-L-cysteine + [acceptor protein]-L-lysine = [E2 ubiquitin-conjugating enzyme]-L-cysteine + N(6)-ubiquitinyl-[acceptor protein]-L-lysine.. The protein operates within protein modification; protein ubiquitination. In terms of biological role, E3 ubiquitin-protein ligase that possess E3 ubiquitin ligase activity in vitro and mediates protein monoubiquitination. Triggers the monoubiquitination of phosphorylated BIK1 in response to pathogen-associated molecular pattern (PAMP) detection. This is Probable E3 ubiquitin-protein ligase ATL44 from Arabidopsis thaliana (Mouse-ear cress).